A 549-amino-acid polypeptide reads, in one-letter code: E-selectin (549 aa).

The N-terminal stretch at M1–A21 is a signal peptide. A C-type lectin domain is found at W22 to Y139. The Extracellular segment spans residues W22–P494. N-linked (GlcNAc...) asparagine glycans are attached at residues N25 and N60. 17 cysteine pairs are disulfide-bonded: C40/C138, C111/C130, C143/C154, C148/C163, C165/C174, C180/C225, C193/C206, C210/C238, C243/C287, C256/C269, C273/C300, C305/C350, C336/C363, C368/C413, C399/C426, C431/C472, and C458/C485. Ca(2+) contacts are provided by E101, N103, and E109. A carbohydrate contacts are provided by residues E101–E109, E113–R118, and N126–E128. Positions 126 and 127 each coordinate Ca(2+). The EGF-like domain maps to T140–D175. A glycan (N-linked (GlcNAc...) asparagine) is linked at N145. 5 Sushi domains span residues V178–V240, V241–A302, V303–A365, S366–G428, and V429–A487. N192 and N203 each carry an N-linked (GlcNAc...) asparagine glycan. N266 carries N-linked (GlcNAc...) asparagine glycosylation. N-linked (GlcNAc...) asparagine glycosylation is found at N313, N320, and N333. Residues N441 and N465 are each glycosylated (N-linked (GlcNAc...) asparagine). A helical transmembrane segment spans residues L495 to L516. At K517–I549 the chain is on the cytoplasmic side.

It belongs to the selectin/LECAM family. In terms of assembly, interacts with SELPLG/PSGL1 and PODXL2 through the sialyl Lewis X epitope. SELPLG sulfation appears not to be required for this interaction.

It is found in the cell membrane. Its function is as follows. Cell-surface glycoprotein having a role in immunoadhesion. Mediates in the adhesion of blood neutrophils in cytokine-activated endothelium through interaction with SELPLG/PSGL1. May have a role in capillary morphogenesis. The protein is E-selectin (Sele) of Rattus norvegicus (Rat).